The sequence spans 254 residues: Acetyl-coenzyme A carboxylase carboxyl transferase subunit beta (254 aa).

A CoA carboxyltransferase N-terminal domain is found at 1 to 254; that stretch reads MWLRCPHCHQ…LLKTGSVANE (254 aa). Zn(2+) is bound by residues cysteine 5, cysteine 8, cysteine 23, and cysteine 26. Residues 5 to 26 form a C4-type zinc finger; that stretch reads CPHCHQLLFAKQLTQYAVCPNC.

It belongs to the AccD/PCCB family. In terms of assembly, acetyl-CoA carboxylase is a heterohexamer composed of biotin carboxyl carrier protein (AccB), biotin carboxylase (AccC) and two subunits each of ACCase subunit alpha (AccA) and ACCase subunit beta (AccD). It depends on Zn(2+) as a cofactor.

The protein localises to the cytoplasm. It carries out the reaction N(6)-carboxybiotinyl-L-lysyl-[protein] + acetyl-CoA = N(6)-biotinyl-L-lysyl-[protein] + malonyl-CoA. The protein operates within lipid metabolism; malonyl-CoA biosynthesis; malonyl-CoA from acetyl-CoA: step 1/1. Component of the acetyl coenzyme A carboxylase (ACC) complex. Biotin carboxylase (BC) catalyzes the carboxylation of biotin on its carrier protein (BCCP) and then the CO(2) group is transferred by the transcarboxylase to acetyl-CoA to form malonyl-CoA. The polypeptide is Acetyl-coenzyme A carboxylase carboxyl transferase subunit beta (Limosilactobacillus reuteri (strain DSM 20016) (Lactobacillus reuteri)).